Here is a 361-residue protein sequence, read N- to C-terminus: Aurora kinase B-A (361 aa).

One can recognise a Protein kinase domain in the interval 93–343 (FDIGRPLGKG…LKGVMEHPWV (251 aa)). ATP-binding positions include 99–107 (LGKGKFGNV) and Lys-122. The active-site Proton acceptor is the Asp-216.

It belongs to the protein kinase superfamily. Ser/Thr protein kinase family. Aurora subfamily. As to quaternary structure, component of the CPC at least composed of survivin/birc5, incenp, cdca8/borealin and/or cdca9/dasra-A, and aurkb/aurora-B. Interacts directly (via N-terminus and kinase domain) with incenp (via C terminus), and may weakly interact (via N-terminus) with birc5.1 to stabilize the complex. Interacts with mtus1. Mg(2+) serves as cofactor. Phosphorylated, stimulates kinase activity.

The protein resides in the nucleus. It is found in the chromosome. The catalysed reaction is L-seryl-[protein] + ATP = O-phospho-L-seryl-[protein] + ADP + H(+). It catalyses the reaction L-threonyl-[protein] + ATP = O-phospho-L-threonyl-[protein] + ADP + H(+). Kinase activity is stimulated by both birc5/survivin-binding and cell-cycle specific phosphorylation. Serine/threonine-protein kinase component of the chromosomal passenger complex (CPC), a complex that acts as a key regulator of mitosis. The CPC complex has essential functions at the centromere in ensuring correct chromosome alignment and segregation and is required for chromatin-induced microtubule stabilization and spindle assembly. Involved in the bipolar attachment of spindle microtubules to kinetochores and is a key regulator for the onset of cytokinesis during mitosis. Required for central/midzone spindle assembly and cleavage furrow formation. Key component of the cytokinesis checkpoint, a process required to delay abscission to prevent both premature resolution of intercellular chromosome bridges and accumulation of DNA damage. Phosphorylates 'Ser-10' of histone H3 during mitosis. The chain is Aurora kinase B-A (aurkb-a) from Xenopus laevis (African clawed frog).